A 626-amino-acid polypeptide reads, in one-letter code: Chaperone protein HtpG (626 aa).

Residues 1–331 form an a; substrate-binding region; it reads MSETVERHEF…TDDLPLNVSR (331 aa). Residues 332 to 544 are b; sequence EMLQSTPTLQ…GMGPDLQMQR (213 aa). The tract at residues 545 to 626 is c; the sequence is LLRRAGRGFG…GTVAKPAESA (82 aa).

This sequence belongs to the heat shock protein 90 family. As to quaternary structure, homodimer.

The protein localises to the cytoplasm. Its function is as follows. Molecular chaperone. Has ATPase activity. This is Chaperone protein HtpG from Methylorubrum populi (strain ATCC BAA-705 / NCIMB 13946 / BJ001) (Methylobacterium populi).